Reading from the N-terminus, the 240-residue chain is RNA polymerase sigma factor SigI (240 aa).

The short motif at 56-69 is the Polymerase core binding element; that stretch reads DEYSIGLFAFNEAI. The H-T-H motif DNA-binding region spans 194 to 213; the sequence is LKHIEPRVRVSRKTLERHRK.

It belongs to the sigma-70 factor family. SigI subfamily. Interacts with RsgI.

The protein localises to the cytoplasm. Its activity is regulated as follows. Negatively regulated by the anti-sigma-I factor RsgI. Functionally, sigma factors are initiation factors that promote the attachment of RNA polymerase to specific initiation sites and are then released. This sigma factor contributes to both stress response and virulence gene expression. In Bacillus anthracis, this protein is RNA polymerase sigma factor SigI.